The chain runs to 550 residues: Hydroxylamine reductase (550 aa).

Positions 3, 6, 18, and 25 each coordinate [2Fe-2S] cluster. Hybrid [4Fe-2O-2S] cluster is bound by residues H249, E273, C317, C405, C433, C458, E492, and K494. At C405 the chain carries Cysteine persulfide.

This sequence belongs to the HCP family. It depends on [2Fe-2S] cluster as a cofactor. Hybrid [4Fe-2O-2S] cluster is required as a cofactor.

It is found in the cytoplasm. It catalyses the reaction A + NH4(+) + H2O = hydroxylamine + AH2 + H(+). Catalyzes the reduction of hydroxylamine to form NH(3) and H(2)O. In Salmonella dublin (strain CT_02021853), this protein is Hydroxylamine reductase.